Reading from the N-terminus, the 178-residue chain is Large ribosomal subunit protein uL6 (178 aa).

The protein belongs to the universal ribosomal protein uL6 family. As to quaternary structure, part of the 50S ribosomal subunit.

In terms of biological role, this protein binds to the 23S rRNA, and is important in its secondary structure. It is located near the subunit interface in the base of the L7/L12 stalk, and near the tRNA binding site of the peptidyltransferase center. The chain is Large ribosomal subunit protein uL6 from Streptococcus agalactiae serotype Ia (strain ATCC 27591 / A909 / CDC SS700).